The following is a 716-amino-acid chain: MQSTANYLWHTDDLLGQGATASVYKARNKKSGELVAVKVFNTTSYLRPREVQVREFEVLRKLNHQNIVKLFAVEETGGSRQKVLVMEYCSSGSLLSVLESPENAFGLPEDEFLVVLRCVVAGMNHLRENGIVHRDIKPGNIMRLVGEEGQSIYKLTDFGAARELDDDEKFVSVYGTEEYLHPDMYERAVLRKPQQKAFGVTVDLWSIGVTLYHAATGSLPFIPFGGPRRNKEIMYRITTEKPAGAIAGAQRRENGPLEWSYTLPITCQLSLGLQSQLVPILANILEVEQAKCWGFDQFFAETSDILQRVVVHVFSLSQAVLHHIYIHAHNTIAIFQEAVHKQTSVAPRHQEYLFEGHLCVLEPSVSAQHIAHTTASSPLTLFSTAIPKGLAFRDPALDVPKFVPKVDLQADYNTAKGVLGAGYQALRLARALLDGQELMFRGLHWVMEVLQATCRRTLEVARTSLLYLSSSLGTERFSSVAGTPEIQELKAAAELRSRLRTLAEVLSRCSQNITETQESLSSLNRELVKSRDQVHEDRSIQQIQCCLDKMNFIYKQFKKSRMRPGLGYNEEQIHKLDKVNFSHLAKRLLQVFQEECVQKYQASLVTHGKRMRVVHETRNHLRLVGCSVAACNTEAQGVQESLSKLLEELSHQLLQDRAKGAQASPPPIAPYPSPTRKDLLLHMQELCEGMKLLASDLLDNNRIIERLNRVPAPPDV.

The region spanning 9 to 315 (WHTDDLLGQG…LQRVVVHVFS (307 aa)) is the Protein kinase domain. An ATP-binding site is contributed by 15–23 (LGQGATASV). Lysine 30 is covalently cross-linked (Glycyl lysine isopeptide (Lys-Gly) (interchain with G-Cter in ubiquitin)). Lysine 38 contributes to the ATP binding site. The active-site Proton acceptor is aspartate 135. A Phosphoserine; by autocatalysis and IKKB modification is found at serine 172. A Glycyl lysine isopeptide (Lys-Gly) (interchain with G-Cter in SUMO1) cross-link involves residue lysine 231. The interaction with DDX3X stretch occupies residues 383 to 647 (STAIPKGLAF…VQESLSKLLE (265 aa)). Lysine 401 participates in a covalent cross-link: Glycyl lysine isopeptide (Lys-Gly) (interchain with G-Cter in ubiquitin). The segment at 436 to 457 (QELMFRGLHWVMEVLQATCRRT) is leucine-zipper. Threonine 501 carries the phosphothreonine modification. Serine 664 bears the Phosphoserine mark.

The protein belongs to the protein kinase superfamily. Ser/Thr protein kinase family. I-kappa-B kinase subfamily. In terms of assembly, homodimer. Interacts with MAVS/IPS1. Interacts (via protein kinase domain) with TTLL12 (via N-terminus); the interaction prevents MAVS binding to IKBKE. Interacts with the adapter proteins AZI2/NAP1, TANK and TBKBP1/SINTBAD. Interacts with SIKE1. Interacts with TICAM1/TRIF, IRF3 and RIGI; interactions are disrupted by the interaction between IKBKE and SIKE1. Interacts with TOPORS; induced by DNA damage. Interacts with CYLD. Interacts (when polyubiquitinated) with IKBKB, IKBKG and MYD88. Interacts with IFIH1. Interacts with DDX3X; the interaction may be induced upon virus infection. Interacts with TRIM6 (via SPRY box). Interacts with unanchored K48-linked polyubiquitin chains; this leads to IKBKE activation. Interacts with TBK1. Interacts with FKBP5. (Microbial infection) Interacts (via Protein kinase domain) with arenavirus protein N; the interaction inhibits IKBKE kinase function. As to quaternary structure, (Microbial infection) Interacts with Ebola virus protein VP35; the interaction leads to inhibition of cellular antiviral response by blocking necessary interactions between the IKBKE and MAVS/IPS as well as its substrates IRF3 and IRF7. In terms of assembly, (Microbial infection) Interacts with Severe fever with thrombocytopenia virus (SFTSV) NSs; this interaction this interaction sequesters IKBKE in NSs-induced cytoplasmic inclusion bodies thereby inhibiting the IFN responses. (Microbial infection) Interacts with human T-cell leukemia virus 1/HTLV-1 protein HBZ. As to quaternary structure, (Microbial infection) Interacts with Epstein-Barr virus (EBV) protein NEC2/BFRF1; this interaction inhibits IKBKE kinase activity and IRF3 nuclear translocation. In terms of processing, autophosphorylated and phosphorylated by IKBKB/IKKB. Phosphorylation at Ser-172 is enhanced by the interaction with DDX3X. Phosphorylated at Thr-501 upon IFN activation. Post-translationally, sumoylation by TOPORS upon DNA damage is required for protection of cells against DNA damage-induced cell death. Desumoylated by SENP1. 'Lys-63'-linked polyubiquitinated at Lys-30 and Lys-401 by TRAF2:BIRC2 and TRAF2:BIRC3 complexes. Ubiquitination is induced by LPS, TNFA and interleukin-1 and required for full kinase activity and KF-kappa-B pathway activation. As to expression, highly expressed in spleen followed by thymus, peripheral blood leukocytes, pancreas, placenta. Weakly expressed in lung, kidney, prostate, ovary and colon.

The protein resides in the cytoplasm. Its subcellular location is the nucleus. It is found in the PML body. It carries out the reaction L-seryl-[I-kappa-B protein] + ATP = O-phospho-L-seryl-[I-kappa-B protein] + ADP + H(+). Serine/threonine kinase that plays an essential role in regulating inflammatory responses to viral infection, through the activation of the type I IFN, NF-kappa-B and STAT signaling. Also involved in TNFA and inflammatory cytokines, like Interleukin-1, signaling. Following activation of viral RNA sensors, such as RIG-I-like receptors, associates with DDX3X and phosphorylates interferon regulatory factors (IRFs), IRF3 and IRF7, as well as DDX3X. This activity allows subsequent homodimerization and nuclear translocation of the IRF3 leading to transcriptional activation of pro-inflammatory and antiviral genes including IFNB. In order to establish such an antiviral state, IKBKE forms several different complexes whose composition depends on the type of cell and cellular stimuli. Thus, several scaffolding molecules including IPS1/MAVS, TANK, AZI2/NAP1 or TBKBP1/SINTBAD can be recruited to the IKBKE-containing-complexes. Activated by polyubiquitination in response to TNFA and interleukin-1, regulates the NF-kappa-B signaling pathway through, at least, the phosphorylation of CYLD. Phosphorylates inhibitors of NF-kappa-B thus leading to the dissociation of the inhibitor/NF-kappa-B complex and ultimately the degradation of the inhibitor. In addition, is also required for the induction of a subset of ISGs which displays antiviral activity, may be through the phosphorylation of STAT1 at 'Ser-708'. Phosphorylation of STAT1 at 'Ser-708' also seems to promote the assembly and DNA binding of ISGF3 (STAT1:STAT2:IRF9) complexes compared to GAF (STAT1:STAT1) complexes, in this way regulating the balance between type I and type II IFN responses. Protects cells against DNA damage-induced cell death. Also plays an important role in energy balance regulation by sustaining a state of chronic, low-grade inflammation in obesity, wich leads to a negative impact on insulin sensitivity. Phosphorylates AKT1. The polypeptide is Inhibitor of nuclear factor kappa-B kinase subunit epsilon (IKBKE) (Homo sapiens (Human)).